The following is a 268-amino-acid chain: Small ribosomal subunit protein eS1 (268 aa).

Positions 1–21 (MAVGKNKGLSKGGKKGGKKKV) are disordered.

Belongs to the eukaryotic ribosomal protein eS1 family. Component of the small ribosomal subunit. Mature ribosomes consist of a small (40S) and a large (60S) subunit. The 40S subunit contains about 33 different proteins and 1 molecule of RNA (18S). The 60S subunit contains about 49 different proteins and 3 molecules of RNA (28S, 5.8S and 5S).

The protein resides in the cytoplasm. In terms of biological role, essential for oogenesis; required for late follicle cell development. The protein is Small ribosomal subunit protein eS1 of Drosophila erecta (Fruit fly).